The chain runs to 198 residues: NAD(P)H dehydrogenase (quinone) (198 aa).

The Flavodoxin-like domain maps to 6–190 (ILVLYYSRHG…LCRALGKRLA (185 aa)). FMN is bound by residues 12-17 (SRHGAT), 79-81 (TRF), 114-120 (STASLHG), and histidine 135.

The protein belongs to the WrbA family. In terms of assembly, homodimer. FMN is required as a cofactor.

It catalyses the reaction a quinone + NADH + H(+) = a quinol + NAD(+). It carries out the reaction a quinone + NADPH + H(+) = a quinol + NADP(+). In Pseudomonas aeruginosa (strain ATCC 15692 / DSM 22644 / CIP 104116 / JCM 14847 / LMG 12228 / 1C / PRS 101 / PAO1), this protein is NAD(P)H dehydrogenase (quinone).